Reading from the N-terminus, the 1088-residue chain is Myocardin-related transcription factor B (1088 aa).

E22 bears the Phosphoserine mark. An RPEL 1 repeat occupies 40 to 65; it reads EVLQLRLQQRRTREQLVDQGIMPPLK. The residue at position 66 (S66) is a Phosphoserine. RPEL repeat units follow at residues 84–109 and 128–153; these read NFLK…EETF and DDLN…PVDS. 4 disordered regions span residues 165 to 310, 349 to 389, 472 to 508, and 528 to 553; these read EDYP…NEPQ, KPLN…PSSL, AELP…STDD, and LSSS…SNLE. Residues 197–213 are compositionally biased toward low complexity; sequence SAASPSEPKVSESPSPV. A compositionally biased stretch (polar residues) spans 214–226; that stretch reads TTNTPAQFASVSP. Residues 238 to 248 show a composition bias toward pro residues; that stretch reads ADQPPPRPAAP. Basic and acidic residues predominate over residues 272-287; sequence NPNDKHRSKKCKDPKP. Over residues 355–366 the composition is skewed to low complexity; it reads NSNSGNSALNNA. Residues T367 and T370 each carry the phosphothreonine modification. Positions 367–378 are enriched in polar residues; it reads TPNTPRQNTSTP. In terms of domain architecture, SAP spans 389–423; it reads LDDLKVSELKTELKLRGLPVSGTKPDLIERLKPYQ. A compositionally biased stretch (polar residues) spans 528–540; sequence LSSSPLRMTNNED. Phosphoserine occurs at positions 541 and 543. Over residues 541-550 the composition is skewed to low complexity; it reads SLSPTSSTLS. Residues 545 to 601 adopt a coiled-coil conformation; it reads TSSTLSNLELDAAEKDRKLQEKEKQIEELKRKLEQEQKLVEVLKMQLEVEKRGQQQR. Residues 563–591 are required for interaction with itself and with MRTFA; it reads LQEKEKQIEELKRKLEQEQKLVEVLKMQL. Disordered stretches follow at residues 595 to 655 and 829 to 886; these read KRGQ…QPVS and NAPL…STQA. Residue K628 forms a Glycyl lysine isopeptide (Lys-Gly) (interchain with G-Cter in SUMO1) linkage. Over residues 829–838 the composition is skewed to polar residues; the sequence is NAPLPSLQNG. A compositionally biased stretch (basic and acidic residues) spans 867–879; sequence KTKDPPRYEEAIK. S921 bears the Phosphoserine mark.

As to quaternary structure, interacts with MRTFA and SRF. In terms of processing, O-glycosylated.

The protein resides in the nucleus. Acts as a transcriptional coactivator of serum response factor (SRF). Required for skeletal myogenic differentiation. This chain is Myocardin-related transcription factor B, found in Homo sapiens (Human).